Consider the following 120-residue polypeptide: Aspartate 1-decarboxylase (120 aa).

The Schiff-base intermediate with substrate; via pyruvic acid role is filled by Ser25. Ser25 carries the post-translational modification Pyruvic acid (Ser). Thr57 provides a ligand contact to substrate. Catalysis depends on Tyr58, which acts as the Proton donor. A substrate-binding site is contributed by 73 to 75 (GAA).

Belongs to the PanD family. In terms of assembly, heterooctamer of four alpha and four beta subunits. Requires pyruvate as cofactor. Post-translationally, is synthesized initially as an inactive proenzyme, which is activated by self-cleavage at a specific serine bond to produce a beta-subunit with a hydroxyl group at its C-terminus and an alpha-subunit with a pyruvoyl group at its N-terminus.

The protein resides in the cytoplasm. It carries out the reaction L-aspartate + H(+) = beta-alanine + CO2. It functions in the pathway cofactor biosynthesis; (R)-pantothenate biosynthesis; beta-alanine from L-aspartate: step 1/1. In terms of biological role, catalyzes the pyruvoyl-dependent decarboxylation of aspartate to produce beta-alanine. In Cupriavidus taiwanensis (strain DSM 17343 / BCRC 17206 / CCUG 44338 / CIP 107171 / LMG 19424 / R1) (Ralstonia taiwanensis (strain LMG 19424)), this protein is Aspartate 1-decarboxylase.